Reading from the N-terminus, the 344-residue chain is Mitogen-activated protein kinase mpkC (344 aa).

In terms of domain architecture, Protein kinase spans 19–298 (YANVQPVGLG…AETALQHPYL (280 aa)). ATP-binding positions include 25 to 33 (VGLGAFGLV) and lysine 48. Residue aspartate 140 is the Proton acceptor of the active site. A Phosphothreonine modification is found at threonine 170. Residues 170–172 (TGY) carry the TXY motif. Residue tyrosine 172 is modified to Phosphotyrosine.

The protein belongs to the protein kinase superfamily. Ser/Thr protein kinase family. MAP kinase subfamily. HOG1 sub-subfamily. The cofactor is Mg(2+). In terms of processing, dually phosphorylated on Thr-170 and Tyr-172, which activates the enzyme.

The catalysed reaction is L-seryl-[protein] + ATP = O-phospho-L-seryl-[protein] + ADP + H(+). It catalyses the reaction L-threonyl-[protein] + ATP = O-phospho-L-threonyl-[protein] + ADP + H(+). Its activity is regulated as follows. Activated by tyrosine and threonine phosphorylation. In terms of biological role, mitogen-activated protein kinase required for growth on media where sorbitol or mannitol is the sole carbon source. This Aspergillus oryzae (strain ATCC 42149 / RIB 40) (Yellow koji mold) protein is Mitogen-activated protein kinase mpkC (mpkC).